We begin with the raw amino-acid sequence, 124 residues long: MPTINQLIRKGREQVVYKSTAPALKECPQKRGVCTRVYTTTPKKPNSALRKVARVRLTNGIEVTSYIPGIGHNLQEHSVVLVRGGRVKDLPGVRYHIVRGALDSAGVQNRNRGRSKYGTKRPKK.

D89 is modified (3-methylthioaspartic acid). The interval 104-124 is disordered; sequence SAGVQNRNRGRSKYGTKRPKK. Residues 111–124 show a composition bias toward basic residues; that stretch reads NRGRSKYGTKRPKK.

Belongs to the universal ribosomal protein uS12 family. In terms of assembly, part of the 30S ribosomal subunit. Contacts proteins S8 and S17. May interact with IF1 in the 30S initiation complex.

Its function is as follows. With S4 and S5 plays an important role in translational accuracy. Functionally, interacts with and stabilizes bases of the 16S rRNA that are involved in tRNA selection in the A site and with the mRNA backbone. Located at the interface of the 30S and 50S subunits, it traverses the body of the 30S subunit contacting proteins on the other side and probably holding the rRNA structure together. The combined cluster of proteins S8, S12 and S17 appears to hold together the shoulder and platform of the 30S subunit. The sequence is that of Small ribosomal subunit protein uS12 from Desulforamulus reducens (strain ATCC BAA-1160 / DSM 100696 / MI-1) (Desulfotomaculum reducens).